Reading from the N-terminus, the 248-residue chain is Cutinase cut1 (248 aa).

A signal peptide spans 1 to 17; it reads MRSLSLFTALLAGQAFA. The cysteines at positions 79 and 153 are disulfide-linked. Ser-164 acts as the Nucleophile in catalysis. A disulfide bridge links Cys-212 with Cys-219. Asp-216 is an active-site residue. The Proton donor/acceptor role is filled by His-229.

Belongs to the cutinase family. Post-translationally, the 2 disulfide bonds play a critical role in holding the catalytic residues in juxta-position; reduction of the disulfide bridges results in the complete inactivation of the enzyme.

The protein localises to the secreted. It carries out the reaction cutin + H2O = cutin monomers.. In terms of biological role, catalyzes the hydrolysis of complex carboxylic polyesters found in the cell wall of plants. May degrade cutin, a macromolecule that forms the structure of the plant cuticle. May also degrade suberin, a specialized macromolecule found in the cell wall of various plant tissues. This Trichoderma harzianum (Hypocrea lixii) protein is Cutinase cut1.